Here is a 750-residue protein sequence, read N- to C-terminus: Cellulose synthase-like protein H1 (750 aa).

The next 2 membrane-spanning stretches (helical) occupy residues 27-47 and 52-72; these read LAIL…DSGA and AALA…NAKW. Residues Asp137 and Asp459 contribute to the active site. 6 helical membrane-spanning segments follow: residues 537 to 557, 570 to 590, 608 to 628, 664 to 684, 697 to 717, and 727 to 747; these read VWPV…YCLL, GFYI…MEFI, ITSA…TLGF, VFIP…VGAW, GPGI…MPLL, and GIPW…LLFC.

This sequence belongs to the glycosyltransferase 2 family. Plant cellulose synthase-like H subfamily.

It localises to the golgi apparatus membrane. Its function is as follows. Thought to be a Golgi-localized beta-glycan synthase that polymerize the backbones of noncellulosic polysaccharides (hemicelluloses) of plant cell wall. This chain is Cellulose synthase-like protein H1 (CSLH1), found in Oryza sativa subsp. japonica (Rice).